A 70-amino-acid polypeptide reads, in one-letter code: Large ribosomal subunit protein eL38 (70 aa).

This sequence belongs to the eukaryotic ribosomal protein eL38 family.

The polypeptide is Large ribosomal subunit protein eL38 (RpL38) (Julodis onopordi (Jewel beetle)).